Reading from the N-terminus, the 142-residue chain is Large ribosomal subunit protein uL13 (142 aa).

This sequence belongs to the universal ribosomal protein uL13 family. In terms of assembly, part of the 50S ribosomal subunit.

Its function is as follows. This protein is one of the early assembly proteins of the 50S ribosomal subunit, although it is not seen to bind rRNA by itself. It is important during the early stages of 50S assembly. The protein is Large ribosomal subunit protein uL13 of Halorhodospira halophila (strain DSM 244 / SL1) (Ectothiorhodospira halophila (strain DSM 244 / SL1)).